A 379-amino-acid polypeptide reads, in one-letter code: Glutamate 5-kinase (379 aa).

Lysine 15 contributes to the ATP binding site. The substrate site is built by serine 54, aspartate 144, and asparagine 156. Position 176–177 (176–177) interacts with ATP; that stretch reads TD. One can recognise a PUA domain in the interval 282–360; the sequence is KGVILVDAGA…GEIERALGYK (79 aa).

The protein belongs to the glutamate 5-kinase family.

The protein localises to the cytoplasm. It catalyses the reaction L-glutamate + ATP = L-glutamyl 5-phosphate + ADP. It participates in amino-acid biosynthesis; L-proline biosynthesis; L-glutamate 5-semialdehyde from L-glutamate: step 1/2. Catalyzes the transfer of a phosphate group to glutamate to form L-glutamate 5-phosphate. The polypeptide is Glutamate 5-kinase (Anaeromyxobacter dehalogenans (strain 2CP-C)).